The sequence spans 526 residues: Dolichyl pyrophosphate Glc1Man9GlcNAc2 alpha-1,3-glucosyltransferase (526 aa).

Helical transmembrane passes span 4 to 24 (FGIA…VTLL), 103 to 122 (LLFQ…YAVH), 143 to 163 (FILS…HIHF), 188 to 208 (GAFL…VAPA), 238 to 258 (LISL…PFLA), 334 to 354 (PLAT…CLWC), 368 to 388 (LCAL…ILLA), 389 to 409 (VLPM…FLIL), 427 to 449 (LPIK…KTLF), 461 to 481 (TFYL…FPFT), and 488 to 508 (PFIP…YAWL).

The protein belongs to the ALG6/ALG8 glucosyltransferase family.

Its subcellular location is the endoplasmic reticulum membrane. The catalysed reaction is an alpha-D-Glc-(1-&gt;3)-alpha-D-Man-(1-&gt;2)-alpha-D-Man-(1-&gt;2)-alpha-D-Man-(1-&gt;3)-[alpha-D-Man-(1-&gt;2)-alpha-D-Man-(1-&gt;3)-[alpha-D-Man-(1-&gt;2)-alpha-D-Man-(1-&gt;6)]-alpha-D-Man-(1-&gt;6)]-beta-D-Man-(1-&gt;4)-beta-D-GlcNAc-(1-&gt;4)-alpha-D-GlcNAc-diphospho-di-trans,poly-cis-dolichol + a di-trans,poly-cis-dolichyl beta-D-glucosyl phosphate = an alpha-D-Glc-(1-&gt;3)-alpha-D-Glc-(1-&gt;3)-alpha-D-Man-(1-&gt;2)-alpha-D-Man-(1-&gt;2)-alpha-D-Man-(1-&gt;3)-[alpha-D-Man-(1-&gt;2)-alpha-D-Man-(1-&gt;3)-[alpha-D-Man-(1-&gt;2)-alpha-D-Man-(1-&gt;6)]-alpha-D-Man-(1-&gt;6)]-beta-D-Man-(1-&gt;4)-beta-D-GlcNAc-(1-&gt;4)-alpha-D-GlcNAc-diphospho-di-trans,poly-cis-dolichol + a di-trans,poly-cis-dolichyl phosphate + H(+). It functions in the pathway protein modification; protein glycosylation. Functionally, dolichyl pyrophosphate Glc1Man9GlcNAc2 alpha-1,3-glucosyltransferase that operates in the biosynthetic pathway of dolichol-linked oligosaccharides, the glycan precursors employed in protein asparagine (N)-glycosylation. The assembly of dolichol-linked oligosaccharides begins on the cytosolic side of the endoplasmic reticulum membrane and finishes in its lumen. The sequential addition of sugars to dolichol pyrophosphate produces dolichol-linked oligosaccharides containing fourteen sugars, including two GlcNAcs, nine mannoses and three glucoses. Once assembled, the oligosaccharide is transferred from the lipid to nascent proteins by oligosaccharyltransferases. In the lumen of the endoplasmic reticulum, adds the second glucose residue from dolichyl phosphate glucose (Dol-P-Glc) onto the lipid-linked oligosaccharide intermediate Glc(1)Man(9)GlcNAc(2)-PP-Dol to produce Glc(2)Man(9)GlcNAc(2)-PP-Dol. Glc(2)Man(9)GlcNAc(2)-PP-Dol is a substrate for ALG10, the following enzyme in the biosynthetic pathway. Required for PKD1/Polycystin-1 maturation and localization to the plasma membrane of the primary cilia. In Bos taurus (Bovine), this protein is Dolichyl pyrophosphate Glc1Man9GlcNAc2 alpha-1,3-glucosyltransferase.